The following is a 279-amino-acid chain: Acetyl-coenzyme A carboxylase carboxyl transferase subunit beta (279 aa).

In terms of domain architecture, CoA carboxyltransferase N-terminal spans 23–279 (LWWKCESCGA…LSQILGHLSS (257 aa)). The Zn(2+) site is built by cysteine 27, cysteine 30, cysteine 46, and cysteine 49. The segment at 27–49 (CESCGAMLHKKQVEDHFYTCCEC) adopts a C4-type zinc-finger fold.

It belongs to the AccD/PCCB family. In terms of assembly, acetyl-CoA carboxylase is a heterohexamer composed of biotin carboxyl carrier protein (AccB), biotin carboxylase (AccC) and two subunits each of ACCase subunit alpha (AccA) and ACCase subunit beta (AccD). It depends on Zn(2+) as a cofactor.

It is found in the cytoplasm. It catalyses the reaction N(6)-carboxybiotinyl-L-lysyl-[protein] + acetyl-CoA = N(6)-biotinyl-L-lysyl-[protein] + malonyl-CoA. It functions in the pathway lipid metabolism; malonyl-CoA biosynthesis; malonyl-CoA from acetyl-CoA: step 1/1. Its function is as follows. Component of the acetyl coenzyme A carboxylase (ACC) complex. Biotin carboxylase (BC) catalyzes the carboxylation of biotin on its carrier protein (BCCP) and then the CO(2) group is transferred by the transcarboxylase to acetyl-CoA to form malonyl-CoA. In Prosthecochloris aestuarii (strain DSM 271 / SK 413), this protein is Acetyl-coenzyme A carboxylase carboxyl transferase subunit beta.